A 308-amino-acid chain; its full sequence is Ribosomal RNA large subunit methyltransferase F (308 aa).

The protein belongs to the methyltransferase superfamily. METTL16/RlmF family.

It localises to the cytoplasm. The catalysed reaction is adenosine(1618) in 23S rRNA + S-adenosyl-L-methionine = N(6)-methyladenosine(1618) in 23S rRNA + S-adenosyl-L-homocysteine + H(+). Its function is as follows. Specifically methylates the adenine in position 1618 of 23S rRNA. The sequence is that of Ribosomal RNA large subunit methyltransferase F from Salmonella heidelberg (strain SL476).